A 68-amino-acid polypeptide reads, in one-letter code: Protein transport protein Sec61 subunit gamma (68 aa).

At 1-32 (MDQFQALIEPARQFSKDSYRLVKRCTKPDRKE) the chain is on the cytoplasmic side. The helical transmembrane segment at 33–61 (YQKIAMATAIGFAIMGFIGFFVKLIHIPI) threads the bilayer. The Extracellular segment spans residues 62 to 68 (NNIIVGA).

It belongs to the SecE/SEC61-gamma family. In terms of assembly, heterotrimeric complex composed of SEC61-alpha, SEC61-beta and SEC61-gamma. Expressed in the germline. Expression in the germline is regulated in a sex- and meiotic cycle stage-specific manner. Expressed in somatic tissues including the intestine and somatic gonad. Expressed in the intestine more highly in hermaprodites than in males. In hermaphrodites, weakly expressed in the spermatheca.

The protein localises to the endoplasmic reticulum membrane. Required for oocyte development and ovulation. Required for the translocation of secretory and transmembrane proteins into the endoplasmic reticulum in vitro. This Caenorhabditis elegans protein is Protein transport protein Sec61 subunit gamma.